The chain runs to 1960 residues: MEESKNEATNRAHVLFDRFVQATTCKGTLKAFQELCDHLELKPKDHRSFYHKLKSKLNYWKAKALWAKLDKRGSHKDYKKGKVCTNTKCLIIGAGPCGLRTAIDLSLLGAKVVVIEKRDAFSRNNVLHLWPFTIHDLRGLGAKKFYGKFCAGAIDHISIRQLQLILLKVALILGIEIHVNVEFRGLVEPPEDQENERIGWRALVHPKTHPVSEYEFEVIIGGDGRRNTLEGFRRKEFRGKLAIAITANFINRNTTAEAKVEEISGVAFIFNQKFFQELREATGIDLENIVYYKDDTHYFVMTAKKQSLLDKGVILHDYADTELLLSRENVDQEALLSYAREAADFSTQQQLPSLDFAINHYGQPDVAMFDFTCMYASENAALVREHNGHQLLVALVGDSLLEPFWPMGTGIARGFLAAMDSAWMVRSWSLGTSPLEVLAERESIYRLLPQTTPENVSKNFSQYSIDPVTRYPNVNVNFLRPSQVRHLYDTGDTKDVHLEMENLVNSRTTPKLARNESVARSSKLLGWCQRQTDGYAGVNVTDLTMSWKSGLALCAIIHRYRPDLIDFDSLDEQNVEKNNQLAFDIAEKELGISPIMTGREMASVGEPDKLSMVMYLTQFYEMFKDSLPSRDASDLNAEERAVLIASTKSPISFLSKLGQTISRKRSPKDKKEKDLDGAGKRRKTSQSEEEDTPRGHRGARPTLVSTLTDRRMDVALGNQNKVKYMATQLLAKFEENAPPQSVGVRRQGSIKKEFPQNLGGSDTCYFCQKRVYVMERLSAEGKFFHRSCFKCEHCATTLRLSAYAYALEDGKFYCKPHYCYRLSGPAQRKRPAGVPLSGKEARGPLQDSPAADASGRPSTSASPAERSPGPSVNGLEEPSVAKRLRGTPERIELENYRLSVRQAEGLEEVPEETQAEHNLSSVLDTGTEEDAASSSSESEMEEEEPPLPTSDLGGVPWKEAVRIHALLRGKSEEELEASRSFGAGEEEEEDEEDEEEEEEEEDEEDEEEDEDESSEVGSPRRLQQLLNPADPLEIQADVHWTHIRESQEERAALAPKSPLPGVPFDEDDLERDVDSEPAEIKGEAAENGDAGDTGAELDDDQHWSDDVPSEANTELHLPAVGAELELRVSDGEEEPPPASVGHPERGPSRVSSPTRSPEEPTGLSSPARSPGAQSAHPPLAAVATGVRSPAESPLPEPSTPPAEPEAHPPIRSQPEARTPPSPASPQRPSPPTQLPICSQPQPSPEATVPSPTLSPIRSQPVPARTSTPLAPLPVKNQGVTKDTLGSSLPGDEALKRSDLVAEFWMKSAEIRRSLGLTPVHRSPGSELAFQSPPLKACPAEKAPQSEGLRLLKPPPVPRKLGLPAAEGAQPCPPTPVSPPDREPKGPREEHRDLSSSSGLGLQGSSSRTRTPGSQSFNTSDSTMLTPPSSPPPPPPDEEPATLHRKPALAGQLVASAPPPPAVCVRPPREPTQPPQEEARKSFVESVDEIPFADDVEDTYDDNTCDDRTEDSSLQETFFTPPSHWPHPKQPLAPENGRGPESAVPLQKRGLPLVSAEAKELAAERMRAREKSVRSQALRDAMARQLSRMKEMDIAAAAPRTPRTPAPRRATAVPPKGPEEPAPRHEATSEELLSPPSDSGGPDGSVTSSEGSSGKSKKRSSLFSPRRSKKEKKPKGEGRPLERPSPGTLEEAAAKPRSLWKSVFSGYRKDKKKSDGRSCPSTPSSGTTVDAGKPRASPVSRAELRTRRQLSCSEDSDLSSDDVLERTSQKSRKEPRTYTEEELNAKLTRRVQKAARRQAKQEELKRLHRAQIIQRQLEQVEEKQRQLEERGVAVEKALRGEAGMGKKDDPKLMQEWFKLVQEKNAMVRYESELMIFARELELEDRQSRLQQELRERMAVEDHLKTEEELAEEKRILNEMLEVVEQRDALVALLEEQRLREKEEDKDLEAAMLSKGFSLHWS.

Positions 2-494 are monooxygenase domain; that stretch reads EESKNEATNR…RHLYDTGDTK (493 aa). FAD is bound by residues cysteine 97, 116–118, 123–125, phenylalanine 183, tyrosine 298, and aspartate 398; these read EKR and RNN. Residues 518–624 form the Calponin-homology (CH) domain; sequence VARSSKLLGW…YLTQFYEMFK (107 aa). At serine 649 the chain carries Phosphoserine. The tract at residues 658 to 704 is disordered; it reads GQTISRKRSPKDKKEKDLDGAGKRRKTSQSEEEDTPRGHRGARPTLV. Residues 669–679 show a composition bias toward basic and acidic residues; that stretch reads DKKEKDLDGAG. Phosphoserine occurs at positions 685 and 687. In terms of domain architecture, LIM zinc-binding spans 762–824; that stretch reads DTCYFCQKRV…KPHYCYRLSG (63 aa). Residues cysteine 764, cysteine 767, histidine 785, cysteine 788, cysteine 791, cysteine 794, cysteine 814, and histidine 817 each contribute to the Zn(2+) site. Disordered stretches follow at residues 826-887 and 906-1295; these read AQRK…LRGT and LEEV…EALK. Position 887 is a phosphothreonine (threonine 887). Serine 971 carries the post-translational modification Phosphoserine. Positions 984 to 1014 are enriched in acidic residues; sequence GEEEEEDEEDEEEEEEEEDEEDEEEDEDESS. 2 stretches are compositionally biased toward basic and acidic residues: residues 1039–1051 and 1072–1084; these read HWTH…EERA and DVDS…KGEA. A phosphoserine mark is found at serine 1129, serine 1139, serine 1156, and serine 1188. Pro residues-rich tracts occupy residues 1192-1203 and 1217-1233; these read SPLPEPSTPPAE and RTPP…PPTQ. Residue serine 1250 is modified to Phosphoserine. A Phosphothreonine modification is found at threonine 1252. A phosphoserine mark is found at serine 1254, serine 1286, and serine 1313. The span at 1277–1286 shows a compositional bias: polar residues; that stretch reads QGVTKDTLGS. Disordered regions lie at residues 1316-1550 and 1564-1782; these read LTPV…KRGL and RMRA…EEEL. At threonine 1317 the chain carries Phosphothreonine. A compositionally biased stretch (basic and acidic residues) spans 1379-1393; it reads PDREPKGPREEHRDL. A compositionally biased stretch (low complexity) spans 1394–1406; it reads SSSSGLGLQGSSS. A Phosphoserine modification is found at serine 1404. Over residues 1407 to 1425 the composition is skewed to polar residues; that stretch reads RTRTPGSQSFNTSDSTMLT. The residue at position 1425 (threonine 1425) is a Phosphothreonine. The span at 1485-1503 shows a compositional bias: acidic residues; that stretch reads SVDEIPFADDVEDTYDDNT. Positions 1594–1611 are enriched in low complexity; the sequence is AAAAPRTPRTPAPRRATA. The segment covering 1616–1627 has biased composition (basic and acidic residues); sequence GPEEPAPRHEAT. Low complexity predominate over residues 1633–1653; it reads SPPSDSGGPDGSVTSSEGSSG. A compositionally biased stretch (basic residues) spans 1654–1672; it reads KSKKRSSLFSPRRSKKEKK. 2 positions are modified to phosphoserine: serine 1660 and serine 1663. Over residues 1718 to 1727 the composition is skewed to polar residues; sequence CPSTPSSGTT. The span at 1762–1778 shows a compositional bias: basic and acidic residues; sequence VLERTSQKSRKEPRTYT. Positions 1779–1952 form a coiled coil; the sequence is EEELNAKLTR…DKDLEAAMLS (174 aa). The 150-residue stretch at 1799 to 1948 folds into the bMERB domain; it reads KQEELKRLHR…EKEEDKDLEA (150 aa). A Phosphoserine modification is found at serine 1870.

It belongs to the Mical family. As to quaternary structure, interacts with RAB1B, RAB8A, RAB10, RAB13 and RAB15 (in their GTP-bound forms); binding to RAB1B is of low affinity compared to other Rab proteins; at least in case of RAB8A can bind 2 molecules of RAB8A simultaneously through a high and a low affinity binding site, respectively. Interacts with ERC1 and RAB8A; may bridge ERC1 with RAB8A. Interacts with KIF23 and ERC1; enhances the interaction between KIF23 and ERC1. Interacts with NINL. Requires FAD as cofactor.

The protein resides in the cytoplasm. It localises to the cell cortex. Its subcellular location is the cytoskeleton. The protein localises to the nucleus. It is found in the midbody. The protein resides in the spindle. It localises to the cilium basal body. The enzyme catalyses L-methionyl-[F-actin] + NADPH + O2 + H(+) = L-methionyl-(R)-S-oxide-[F-actin] + NADP(+) + H2O. Monooxygenase that promotes depolymerization of F-actin by mediating oxidation of specific methionine residues on actin to form methionine-sulfoxide, resulting in actin filament disassembly and preventing repolymerization. In the absence of actin, it also functions as a NADPH oxidase producing H(2)O(2). Seems to act as Rab effector protein and play a role in vesicle trafficking. Involved in exocytic vesicles tethering and fusion: the monooxygenase activity is required for this process and implicates RAB8A associated with exocytotic vesicles. Required for cytokinesis. Contributes to stabilization and/or maturation of the intercellular bridge independently of its monooxygenase activity. Promotes recruitment of Rab8 and ERC1 to the intercellular bridge, and together these proteins are proposed to function in timely abscission. This Bos taurus (Bovine) protein is [F-actin]-monooxygenase MICAL3 (MICAL3).